Here is a 313-residue protein sequence, read N- to C-terminus: Foldase protein PrsA (313 aa).

An N-terminal signal peptide occupies residues 1 to 20 (MKKKLLAGAITLLSVATLAA). Cysteine 21 carries N-palmitoyl cysteine lipidation. Residue cysteine 21 is the site of S-diacylglycerol cysteine attachment. A PpiC domain is found at 143-241 (TPDVTAQIIR…SQYYIVKLTK (99 aa)).

Belongs to the PrsA family.

The protein localises to the cell membrane. The catalysed reaction is [protein]-peptidylproline (omega=180) = [protein]-peptidylproline (omega=0). In terms of biological role, plays a major role in protein secretion by helping the post-translocational extracellular folding of several secreted proteins. This Streptococcus pneumoniae (strain P1031) protein is Foldase protein PrsA.